Consider the following 691-residue polypeptide: Elongation factor G (691 aa).

Residues 8–282 enclose the tr-type G domain; that stretch reads ERVRNIGIAA…AVVNYLPAPV (275 aa). GTP is bound by residues 17–24, 81–85, and 135–138; these read AHIDAGKT, DTPGH, and NKMD.

It belongs to the TRAFAC class translation factor GTPase superfamily. Classic translation factor GTPase family. EF-G/EF-2 subfamily.

The protein localises to the cytoplasm. In terms of biological role, catalyzes the GTP-dependent ribosomal translocation step during translation elongation. During this step, the ribosome changes from the pre-translocational (PRE) to the post-translocational (POST) state as the newly formed A-site-bound peptidyl-tRNA and P-site-bound deacylated tRNA move to the P and E sites, respectively. Catalyzes the coordinated movement of the two tRNA molecules, the mRNA and conformational changes in the ribosome. The chain is Elongation factor G from Prochlorococcus marinus (strain NATL1A).